A 225-amino-acid polypeptide reads, in one-letter code: uncharacterized protein (225 aa).

N-linked (GlcNAc...) asparagine; by host glycans are attached at residues N48, N58, N105, and N108. The chain crosses the membrane as a helical span at residues 156 to 178 (LWGYLKQPLVMVGIAAVVGYLIY).

This sequence belongs to the ascovirus HvAv ORF58 family.

The protein localises to the membrane. This is an uncharacterized protein from Heliothis virescens ascovirus 3e (HvAV-3e).